We begin with the raw amino-acid sequence, 70 residues long: Cold shock-like protein CspH (70 aa).

The 61-residue stretch at 7–67 folds into the CSD domain; that stretch reads GIVKTFDRKS…GLRGPTAANV (61 aa).

The protein resides in the cytoplasm. This chain is Cold shock-like protein CspH (cspH), found in Escherichia coli O6:H1 (strain CFT073 / ATCC 700928 / UPEC).